A 795-amino-acid chain; its full sequence is Glycerol-3-phosphate acyltransferase 2, mitochondrial (795 aa).

Residues 1 to 21 (MATMLEGRCQTQPRSSPSGRE) are disordered. The Cytoplasmic portion of the chain corresponds to 1 to 305 (MATMLEGRCQ…LGPRLSALGQ (305 aa)). A compositionally biased stretch (polar residues) spans 9 to 18 (CQTQPRSSPS). The acyltransferase stretch occupies residues 180 to 331 (QLHKGQMKMV…DALLVPVAVT (152 aa)). The HXXXXD motif signature appears at 205–210 (HKTLLD). A helical transmembrane segment spans residues 306-332 (AWVGFVVQAVQVGIVPDALLVPVAVTY). Residues 333-449 (DLVPDAPCDI…QLLVRRLSCH (117 aa)) lie on the Mitochondrial intermembrane side of the membrane. A helical membrane pass occupies residues 450 to 472 (VLSASVGSSAVMSTAIMATLLLF). Over 473–795 (KHQKLLGEFS…EQFIRQFICS (323 aa)) the chain is Cytoplasmic. S656 carries the post-translational modification Phosphoserine. At T660 the chain carries Phosphothreonine. Phosphoserine occurs at positions 662 and 664.

This sequence belongs to the GPAT/DAPAT family. Interacts with PIWIL2.

Its subcellular location is the mitochondrion outer membrane. It carries out the reaction sn-glycerol 3-phosphate + an acyl-CoA = a 1-acyl-sn-glycero-3-phosphate + CoA. The catalysed reaction is a 1-acyl-sn-glycero-3-phosphate + an acyl-CoA = a 1,2-diacyl-sn-glycero-3-phosphate + CoA. It catalyses the reaction 1-(9Z-octadecenoyl)-sn-glycero-3-phosphate + (9Z)-octadecenoyl-CoA = 1,2-di-(9Z-octadecenoyl)-sn-glycero-3-phosphate + CoA. The enzyme catalyses 1-(9Z-octadecenoyl)-sn-glycero-3-phosphate + (5Z,8Z,11Z,14Z)-eicosatetraenoyl-CoA = 1-(9Z)-octadecenoyl-2-(5Z,8Z,11Z,14Z)-eicosatetraenoyl-sn-glycero-3-phosphate + CoA. It carries out the reaction (5Z,8Z,11Z,14Z)-eicosatetraenoyl-CoA + sn-glycerol 3-phosphate = 1-(5Z,8Z,11Z,14Z-eicosatetraenoyl)-sn-glycero-3-phosphate + CoA. The protein operates within phospholipid metabolism; CDP-diacylglycerol biosynthesis; CDP-diacylglycerol from sn-glycerol 3-phosphate: step 1/3. Its activity is regulated as follows. Inhibited by N-ethylmaleimide (NEM). In terms of biological role, transfers an acyl-group from acyl-ACP to the sn-1 position of glycerol-3-phosphate producing a lysophosphatidic acid (LPA), an essential step for the triacylglycerol (TAG) and glycerophospholipids. In vitro also transfers an acyl-group from acyl-ACP to the LPA producing a phosphatidic acid (PA). Prefers arachidonoyl-CoA as the acyl donor. Required for primary processing step during piRNA biosynthesis. Molecular mechanisms by which it promotes piRNA biosynthesis are unclear and do not involve its acyltransferase activity. The chain is Glycerol-3-phosphate acyltransferase 2, mitochondrial from Homo sapiens (Human).